The primary structure comprises 123 residues: uncharacterized protein (123 aa).

Residues 34 to 53 (LPFFFLFLGNLGKFFFLWPL) form a helical membrane-spanning segment.

The protein resides in the membrane. This is an uncharacterized protein from Saccharomyces cerevisiae (strain ATCC 204508 / S288c) (Baker's yeast).